A 99-amino-acid polypeptide reads, in one-letter code: MNSVTKISTLLIVILSFLCFVEGLICNSCEKSRDSRCTMSQSRCVAKPGESCSTVSHFVGTKHVYSKQMCSPQCKEKQLNTGKKLIYIMCCEKNLCNSF.

The first 23 residues, 1 to 23, serve as a signal peptide directing secretion; it reads MNSVTKISTLLIVILSFLCFVEG. In terms of domain architecture, UPAR/Ly6 spans 24–99; it reads LICNSCEKSR…CCEKNLCNSF (76 aa). Intrachain disulfides connect cysteine 26–cysteine 52, cysteine 29–cysteine 37, cysteine 44–cysteine 70, and cysteine 74–cysteine 90.

Expressed in prostate, testis, eye, kidney and skeletal muscle. Expressed in the dorsal lobe of prostate. Not expressed in the ventral lobe of prostate.

It localises to the secreted. Enhances sperm motility. Binds to calmodulin and inhibits calcium transport into spermatozoa. May modulate the function of nicotinic acetylcholine receptors. This chain is Prostate and testis expressed protein 4 (Pate4), found in Mus musculus (Mouse).